We begin with the raw amino-acid sequence, 312 residues long: DNA-directed RNA polymerase subunit alpha (312 aa).

Residues 1–226 form an alpha N-terminal domain (alpha-NTD) region; the sequence is MIEFEKPNIT…EHFKVFMSTD (226 aa). The alpha C-terminal domain (alpha-CTD) stretch occupies residues 243–312; that stretch reads NEKKLEMTIE…DLGLSLRQDD (70 aa).

The protein belongs to the RNA polymerase alpha chain family. In terms of assembly, homodimer. The RNAP catalytic core consists of 2 alpha, 1 beta, 1 beta' and 1 omega subunit. When a sigma factor is associated with the core the holoenzyme is formed, which can initiate transcription.

It carries out the reaction RNA(n) + a ribonucleoside 5'-triphosphate = RNA(n+1) + diphosphate. DNA-dependent RNA polymerase catalyzes the transcription of DNA into RNA using the four ribonucleoside triphosphates as substrates. The sequence is that of DNA-directed RNA polymerase subunit alpha from Lactobacillus johnsonii (strain CNCM I-12250 / La1 / NCC 533).